The chain runs to 299 residues: 4-hydroxybenzoate octaprenyltransferase (299 aa).

8 helical membrane-spanning segments follow: residues 33–53, 56–76, 105–125, 151–171, 180–200, 214–234, 247–267, and 278–298; these read VGFL…ADGV, WWTL…GCVI, NALL…LTMN, LPQV…FAAI, WLLY…YAMV, AILF…LMLL, HTYW…FIIA, and AFMH…LATT.

It belongs to the UbiA prenyltransferase family. Requires Mg(2+) as cofactor.

It localises to the cell inner membrane. It catalyses the reaction all-trans-octaprenyl diphosphate + 4-hydroxybenzoate = 4-hydroxy-3-(all-trans-octaprenyl)benzoate + diphosphate. The protein operates within cofactor biosynthesis; ubiquinone biosynthesis. Catalyzes the prenylation of para-hydroxybenzoate (PHB) with an all-trans polyprenyl group. Mediates the second step in the final reaction sequence of ubiquinone-8 (UQ-8) biosynthesis, which is the condensation of the polyisoprenoid side chain with PHB, generating the first membrane-bound Q intermediate 3-octaprenyl-4-hydroxybenzoate. The polypeptide is 4-hydroxybenzoate octaprenyltransferase (Xylella fastidiosa (strain M23)).